Consider the following 70-residue polypeptide: Large ribosomal subunit protein eL24 (70 aa).

The Zn(2+) site is built by Cys6, Cys9, Cys32, and Cys36. Residues 6–36 (CSYCGRPIPPGYGIMYVRVDGVVLRFCSRRC) form a C4-type zinc finger.

Belongs to the eukaryotic ribosomal protein eL24 family. As to quaternary structure, part of the 50S ribosomal subunit. Forms a cluster with proteins L3 and L14. Zn(2+) serves as cofactor.

Its function is as follows. Binds to the 23S rRNA. This chain is Large ribosomal subunit protein eL24, found in Caldivirga maquilingensis (strain ATCC 700844 / DSM 13496 / JCM 10307 / IC-167).